We begin with the raw amino-acid sequence, 596 residues long: uncharacterized protein (596 aa).

Basic residues-rich tracts occupy residues 1 to 10 (MRLRSQKRGN) and 18 to 29 (KTRKGKGKKLKP). The disordered stretch occupies residues 1 to 30 (MRLRSQKRGNKFVALPAKTRKGKGKKLKPK).

This is an uncharacterized protein from Magallana gigas (Pacific oyster).